The sequence spans 157 residues: Small ribosomal subunit protein uS7 (157 aa).

This sequence belongs to the universal ribosomal protein uS7 family. In terms of assembly, part of the 30S ribosomal subunit. Contacts proteins S9 and S11.

Its function is as follows. One of the primary rRNA binding proteins, it binds directly to 16S rRNA where it nucleates assembly of the head domain of the 30S subunit. Is located at the subunit interface close to the decoding center, probably blocks exit of the E-site tRNA. This Leptospira borgpetersenii serovar Hardjo-bovis (strain JB197) protein is Small ribosomal subunit protein uS7.